A 380-amino-acid polypeptide reads, in one-letter code: 1-deoxy-D-xylulose 5-phosphate reductoisomerase (380 aa).

8 residues coordinate NADPH: Ser10, Gly11, Ser12, Ile13, Gly36, Lys37, Asn38, and Asn120. 1-deoxy-D-xylulose 5-phosphate is bound at residue Lys121. Glu122 lines the NADPH pocket. Asp146 is a binding site for Mn(2+). 1-deoxy-D-xylulose 5-phosphate contacts are provided by Ser147, Glu148, Ser172, and His195. Glu148 provides a ligand contact to Mn(2+). Gly201 is an NADPH binding site. Positions 208, 213, 214, and 217 each coordinate 1-deoxy-D-xylulose 5-phosphate. Mn(2+) is bound at residue Glu217.

It belongs to the DXR family. The cofactor is Mg(2+). Requires Mn(2+) as cofactor.

It catalyses the reaction 2-C-methyl-D-erythritol 4-phosphate + NADP(+) = 1-deoxy-D-xylulose 5-phosphate + NADPH + H(+). Its pathway is isoprenoid biosynthesis; isopentenyl diphosphate biosynthesis via DXP pathway; isopentenyl diphosphate from 1-deoxy-D-xylulose 5-phosphate: step 1/6. Catalyzes the NADPH-dependent rearrangement and reduction of 1-deoxy-D-xylulose-5-phosphate (DXP) to 2-C-methyl-D-erythritol 4-phosphate (MEP). The sequence is that of 1-deoxy-D-xylulose 5-phosphate reductoisomerase from Bacillus cereus (strain AH187).